The primary structure comprises 1398 residues: DNA-directed RNA polymerase subunit beta' (1398 aa).

Zn(2+) is bound by residues Cys71, Cys73, Cys86, and Cys89. The Mg(2+) site is built by Asp462, Asp464, and Asp466. Zn(2+) contacts are provided by Cys810, Cys883, Cys890, and Cys893. A disordered region spans residues 1377 to 1398; the sequence is EKQAAVVSPAPEAELPALPPAE. The span at 1380–1392 shows a compositional bias: low complexity; sequence AAVVSPAPEAELP.

The protein belongs to the RNA polymerase beta' chain family. In terms of assembly, the RNAP catalytic core consists of 2 alpha, 1 beta, 1 beta' and 1 omega subunit. When a sigma factor is associated with the core the holoenzyme is formed, which can initiate transcription. The cofactor is Mg(2+). It depends on Zn(2+) as a cofactor.

The enzyme catalyses RNA(n) + a ribonucleoside 5'-triphosphate = RNA(n+1) + diphosphate. DNA-dependent RNA polymerase catalyzes the transcription of DNA into RNA using the four ribonucleoside triphosphates as substrates. This is DNA-directed RNA polymerase subunit beta' from Bradyrhizobium diazoefficiens (strain JCM 10833 / BCRC 13528 / IAM 13628 / NBRC 14792 / USDA 110).